The chain runs to 433 residues: Probable mannose-6-phosphate isomerase (433 aa).

Residues Gln-103, His-105, Glu-130, and His-277 each coordinate Zn(2+). Residue Arg-296 is part of the active site.

The protein belongs to the mannose-6-phosphate isomerase type 1 family. Zn(2+) serves as cofactor.

It is found in the cytoplasm. It carries out the reaction D-mannose 6-phosphate = D-fructose 6-phosphate. The protein operates within nucleotide-sugar biosynthesis; GDP-alpha-D-mannose biosynthesis; alpha-D-mannose 1-phosphate from D-fructose 6-phosphate: step 1/2. In terms of biological role, involved in the synthesis of the GDP-mannose and dolichol-phosphate-mannose required for a number of critical mannosyl transfer reactions. The chain is Probable mannose-6-phosphate isomerase (PMIH) from Echinococcus multilocularis (Fox tapeworm).